The sequence spans 121 residues: DNA-directed RNA polymerase subunit Rpo8 (121 aa).

Belongs to the archaeal Rpo8 RNA polymerase subunit family. In terms of assembly, part of the 13-subunit RNA polymerase complex. In terms of processing, this subunit is phosphorylated.

It is found in the cytoplasm. It carries out the reaction RNA(n) + a ribonucleoside 5'-triphosphate = RNA(n+1) + diphosphate. DNA-dependent RNA polymerase (RNAP) catalyzes the transcription of DNA into RNA using the four ribonucleoside triphosphates as substrates. This Sulfolobus acidocaldarius (strain ATCC 33909 / DSM 639 / JCM 8929 / NBRC 15157 / NCIMB 11770) protein is DNA-directed RNA polymerase subunit Rpo8.